We begin with the raw amino-acid sequence, 421 residues long: Glutamyl-tRNA reductase (421 aa).

Substrate-binding positions include 49–52, Ser-109, 114–116, and Gln-120; these read TCNR and EPQ. The active-site Nucleophile is the Cys-50. Residue 189–194 coordinates NADP(+); that stretch reads GLGQIG.

The protein belongs to the glutamyl-tRNA reductase family. In terms of assembly, homodimer.

It carries out the reaction (S)-4-amino-5-oxopentanoate + tRNA(Glu) + NADP(+) = L-glutamyl-tRNA(Glu) + NADPH + H(+). Its pathway is porphyrin-containing compound metabolism; protoporphyrin-IX biosynthesis; 5-aminolevulinate from L-glutamyl-tRNA(Glu): step 1/2. Catalyzes the NADPH-dependent reduction of glutamyl-tRNA(Glu) to glutamate 1-semialdehyde (GSA). This chain is Glutamyl-tRNA reductase, found in Limosilactobacillus reuteri (strain DSM 20016) (Lactobacillus reuteri).